Reading from the N-terminus, the 172-residue chain is Dual-action ribosomal maturation protein DarP (172 aa).

This sequence belongs to the DarP family.

Its subcellular location is the cytoplasm. In terms of biological role, member of a network of 50S ribosomal subunit biogenesis factors which assembles along the 30S-50S interface, preventing incorrect 23S rRNA structures from forming. Promotes peptidyl transferase center (PTC) maturation. The chain is Dual-action ribosomal maturation protein DarP from Ectopseudomonas mendocina (strain ymp) (Pseudomonas mendocina).